Consider the following 166-residue polypeptide: Large ribosomal subunit protein uL10 (166 aa).

The protein belongs to the universal ribosomal protein uL10 family. Part of the ribosomal stalk of the 50S ribosomal subunit. The N-terminus interacts with L11 and the large rRNA to form the base of the stalk. The C-terminus forms an elongated spine to which L12 dimers bind in a sequential fashion forming a multimeric L10(L12)X complex.

Forms part of the ribosomal stalk, playing a central role in the interaction of the ribosome with GTP-bound translation factors. The chain is Large ribosomal subunit protein uL10 from Shewanella baltica (strain OS223).